The following is a 788-amino-acid chain: Endonuclease MutS2 (788 aa).

334 to 341 (GPNTGGKT) is an ATP binding site. Positions 713–788 (LDLRGKRYEE…GNGATVVKFQ (76 aa)) constitute a Smr domain.

This sequence belongs to the DNA mismatch repair MutS family. MutS2 subfamily. In terms of assembly, homodimer. Binds to stalled ribosomes, contacting rRNA.

Endonuclease that is involved in the suppression of homologous recombination and thus may have a key role in the control of bacterial genetic diversity. Its function is as follows. Acts as a ribosome collision sensor, splitting the ribosome into its 2 subunits. Detects stalled/collided 70S ribosomes which it binds and splits by an ATP-hydrolysis driven conformational change. Acts upstream of the ribosome quality control system (RQC), a ribosome-associated complex that mediates the extraction of incompletely synthesized nascent chains from stalled ribosomes and their subsequent degradation. Probably generates substrates for RQC. The polypeptide is Endonuclease MutS2 (Enterococcus faecalis (strain ATCC 700802 / V583)).